Reading from the N-terminus, the 456-residue chain is Glutathione reductase (456 aa).

FAD contacts are provided by Ser14, Gly15, Glu34, Thr41, Cys42, and Lys50. Ser14 is a binding site for glutathione. Cys42 and Cys47 form a disulfide bridge. A glutathione-binding site is contributed by Tyr99. Gly115 is a binding site for FAD. Positions 180, 183, 186, 203, 209, and 267 each coordinate NADP(+). Position 308 (Asp308) interacts with FAD. Position 315 (Glu315) interacts with NADP(+). Thr317 provides a ligand contact to FAD. Arg325 contributes to the glutathione binding site. NADP(+) is bound at residue Val348. FAD is bound at residue His445. The Proton acceptor role is filled by His445.

This sequence belongs to the class-I pyridine nucleotide-disulfide oxidoreductase family. As to quaternary structure, homodimer. The cofactor is FAD.

It is found in the cytoplasm. The enzyme catalyses 2 glutathione + NADP(+) = glutathione disulfide + NADPH + H(+). Its function is as follows. Catalyzes the reduction of glutathione disulfide (GSSG) to reduced glutathione (GSH). Constitutes the major mechanism to maintain a high GSH:GSSG ratio in the cytosol. The polypeptide is Glutathione reductase (gor) (Haemophilus influenzae (strain ATCC 51907 / DSM 11121 / KW20 / Rd)).